A 224-amino-acid polypeptide reads, in one-letter code: Deoxyribose-phosphate aldolase (224 aa).

D92 serves as the catalytic Proton donor/acceptor. Catalysis depends on K154, which acts as the Schiff-base intermediate with acetaldehyde. K183 functions as the Proton donor/acceptor in the catalytic mechanism.

Belongs to the DeoC/FbaB aldolase family. DeoC type 1 subfamily.

It is found in the cytoplasm. The catalysed reaction is 2-deoxy-D-ribose 5-phosphate = D-glyceraldehyde 3-phosphate + acetaldehyde. The protein operates within carbohydrate degradation; 2-deoxy-D-ribose 1-phosphate degradation; D-glyceraldehyde 3-phosphate and acetaldehyde from 2-deoxy-alpha-D-ribose 1-phosphate: step 2/2. Catalyzes a reversible aldol reaction between acetaldehyde and D-glyceraldehyde 3-phosphate to generate 2-deoxy-D-ribose 5-phosphate. This chain is Deoxyribose-phosphate aldolase, found in Histophilus somni (strain 129Pt) (Haemophilus somnus).